Reading from the N-terminus, the 345-residue chain is Phosphate acyltransferase (345 aa).

This sequence belongs to the PlsX family. As to quaternary structure, homodimer. Probably interacts with PlsY.

It is found in the cytoplasm. The catalysed reaction is a fatty acyl-[ACP] + phosphate = an acyl phosphate + holo-[ACP]. It participates in lipid metabolism; phospholipid metabolism. Catalyzes the reversible formation of acyl-phosphate (acyl-PO(4)) from acyl-[acyl-carrier-protein] (acyl-ACP). This enzyme utilizes acyl-ACP as fatty acyl donor, but not acyl-CoA. The sequence is that of Phosphate acyltransferase from Thermodesulfovibrio yellowstonii (strain ATCC 51303 / DSM 11347 / YP87).